We begin with the raw amino-acid sequence, 426 residues long: Mediator of RNA polymerase II transcription subunit 4 (426 aa).

Residues 1-56 (MLQHQIVQSPARLGLTGPGSPSVQNPTPTRHGHPTSSSSSQSQHQQIQQQPNLLPS) are disordered. Over residues 19–28 (GSPSVQNPTP) the composition is skewed to polar residues. The span at 36 to 56 (SSSSSQSQHQQIQQQPNLLPS) shows a compositional bias: low complexity. A coiled-coil region spans residues 160-212 (TELQEILDLQDAKQKVAREIKSKDSSLLAFANKLKDAERVLDMLVDDYSDYRK). 2 disordered regions span residues 214-236 (KRSK…STTV) and 373-426 (IAAP…DDED). The segment covering 406-426 (ILEDDDSSDYSSDDASSDDED) has biased composition (acidic residues).

It belongs to the Mediator complex subunit 4 family. As to quaternary structure, component of the Mediator complex.

The protein resides in the nucleus. Component of the Mediator complex, a coactivator involved in the regulated transcription of nearly all RNA polymerase II-dependent genes. Mediator functions as a bridge to convey information from gene-specific regulatory proteins to the basal RNA polymerase II transcription machinery. The Mediator complex, having a compact conformation in its free form, is recruited to promoters by direct interactions with regulatory proteins and serves for the assembly of a functional preinitiation complex with RNA polymerase II and the general transcription factors. The polypeptide is Mediator of RNA polymerase II transcription subunit 4 (MED4) (Arabidopsis thaliana (Mouse-ear cress)).